The sequence spans 238 residues: Leucine-rich repeat-containing protein 57 (238 aa).

LRR repeat units follow at residues 10–36, 37–62, 64–82, 83–106, 108–128, 129–152, 154–173, and 174–199; these read LETS…LQKL, TANL…SFQH, KSFT…DIGK, LKKL…IGQL, SLRT…GLGT, LRQL…VAEL, AIEI…EVSR, and TPRL…ILTD.

The polypeptide is Leucine-rich repeat-containing protein 57 (lrrc57) (Danio rerio (Zebrafish)).